The chain runs to 421 residues: UDP-N-acetylglucosamine 1-carboxyvinyltransferase (421 aa).

Residue 22 to 23 coordinates phosphoenolpyruvate; it reads KN. Arginine 93 contributes to the UDP-N-acetyl-alpha-D-glucosamine binding site. Residue cysteine 117 is the Proton donor of the active site. Cysteine 117 is modified (2-(S-cysteinyl)pyruvic acid O-phosphothioketal). Residues 122-126, aspartate 308, and valine 330 contribute to the UDP-N-acetyl-alpha-D-glucosamine site; that span reads RPVDL.

It belongs to the EPSP synthase family. MurA subfamily.

It is found in the cytoplasm. It carries out the reaction phosphoenolpyruvate + UDP-N-acetyl-alpha-D-glucosamine = UDP-N-acetyl-3-O-(1-carboxyvinyl)-alpha-D-glucosamine + phosphate. It functions in the pathway cell wall biogenesis; peptidoglycan biosynthesis. In terms of biological role, cell wall formation. Adds enolpyruvyl to UDP-N-acetylglucosamine. The protein is UDP-N-acetylglucosamine 1-carboxyvinyltransferase of Pseudomonas paraeruginosa (strain DSM 24068 / PA7) (Pseudomonas aeruginosa (strain PA7)).